A 465-amino-acid polypeptide reads, in one-letter code: Glutamate--tRNA ligase (465 aa).

The 'HIGH' region motif lies at 8 to 18 (PSPTGDLHIGG). The 'KMSKS' region signature appears at 235–239 (RLSKR). An ATP-binding site is contributed by Lys238.

The protein belongs to the class-I aminoacyl-tRNA synthetase family. Glutamate--tRNA ligase type 1 subfamily. Monomer.

The protein localises to the cytoplasm. It carries out the reaction tRNA(Glu) + L-glutamate + ATP = L-glutamyl-tRNA(Glu) + AMP + diphosphate. In terms of biological role, catalyzes the attachment of glutamate to tRNA(Glu) in a two-step reaction: glutamate is first activated by ATP to form Glu-AMP and then transferred to the acceptor end of tRNA(Glu). The sequence is that of Glutamate--tRNA ligase from Dichelobacter nodosus (strain VCS1703A).